Consider the following 514-residue polypeptide: Na(+)/H(+) antiporter NhaB (514 aa).

Helical transmembrane passes span 21-41, 43-63, 88-108, 143-163, 203-223, 239-259, 304-324, 349-369, 390-410, 448-468, and 484-504; these read LAIV…SPFI, GWLL…CYPL, IMAN…IFFM, FLDA…FYGV, LMMH…VGEP, FFLR…LTCF, ALIA…VGLI, QESL…AVII, LALF…VFVA, ATPN…SPLI, and IVLS…ATIW.

It belongs to the NhaB Na(+)/H(+) (TC 2.A.34) antiporter family.

It localises to the cell inner membrane. The catalysed reaction is 2 Na(+)(in) + 3 H(+)(out) = 2 Na(+)(out) + 3 H(+)(in). In terms of biological role, na(+)/H(+) antiporter that extrudes sodium in exchange for external protons. The sequence is that of Na(+)/H(+) antiporter NhaB from Haemophilus influenzae (strain ATCC 51907 / DSM 11121 / KW20 / Rd).